Reading from the N-terminus, the 242-residue chain is Uridylate kinase (242 aa).

11–14 (KLSG) contributes to the ATP binding site. Residues 19-24 (GDKGVG) form an involved in allosteric activation by GTP region. Glycine 53 is a UMP binding site. ATP contacts are provided by glycine 54 and arginine 58. Residues aspartate 73 and 134–141 (IGSPYFST) each bind UMP. Residues asparagine 162, tyrosine 168, and aspartate 171 each coordinate ATP.

The protein belongs to the UMP kinase family. As to quaternary structure, homohexamer.

It localises to the cytoplasm. It carries out the reaction UMP + ATP = UDP + ADP. It participates in pyrimidine metabolism; CTP biosynthesis via de novo pathway; UDP from UMP (UMPK route): step 1/1. With respect to regulation, allosterically activated by GTP. Inhibited by UTP. In terms of biological role, catalyzes the reversible phosphorylation of UMP to UDP. This is Uridylate kinase from Streptococcus agalactiae serotype Ia (strain ATCC 27591 / A909 / CDC SS700).